A 278-amino-acid polypeptide reads, in one-letter code: Rhomboid protease GlpG (278 aa).

The next 6 helical transmembrane spans lie at 94–114 (AGPL…LMLI), 143–163 (AFLH…WYLG), 175–195 (LLVL…LFSG), 196–216 (ANFG…WLTG), 224–241 (ISLP…LIAG), and 245–267 (ILGL…LMAF). Residue S202 is the Nucleophile of the active site. The active site involves H255.

Belongs to the peptidase S54 family.

It localises to the cell inner membrane. The catalysed reaction is Cleaves type-1 transmembrane domains using a catalytic dyad composed of serine and histidine that are contributed by different transmembrane domains.. In terms of biological role, rhomboid-type serine protease that catalyzes intramembrane proteolysis. This chain is Rhomboid protease GlpG, found in Yersinia pseudotuberculosis serotype I (strain IP32953).